A 447-amino-acid polypeptide reads, in one-letter code: Phosphoglucosamine mutase (447 aa).

Ser-102 functions as the Phosphoserine intermediate in the catalytic mechanism. Positions 102, 241, 243, and 245 each coordinate Mg(2+). Phosphoserine is present on Ser-102.

It belongs to the phosphohexose mutase family. Mg(2+) is required as a cofactor. In terms of processing, activated by phosphorylation.

The enzyme catalyses alpha-D-glucosamine 1-phosphate = D-glucosamine 6-phosphate. Its function is as follows. Catalyzes the conversion of glucosamine-6-phosphate to glucosamine-1-phosphate. This Pseudomonas syringae pv. tomato (strain ATCC BAA-871 / DC3000) protein is Phosphoglucosamine mutase.